A 128-amino-acid chain; its full sequence is Large ribosomal subunit protein eL22 (128 aa).

At threonine 62 the chain carries Phosphothreonine. Serine 66 is subject to Phosphoserine. At lysine 69 the chain carries N6-succinyllysine.

It belongs to the eukaryotic ribosomal protein eL22 family. Component of the large ribosomal subunit.

It localises to the cytoplasm. In terms of biological role, component of the large ribosomal subunit. The ribosome is a large ribonucleoprotein complex responsible for the synthesis of proteins in the cell. This chain is Large ribosomal subunit protein eL22 (RPL22), found in Oryctolagus cuniculus (Rabbit).